The chain runs to 1829 residues: Afadin (1829 aa).

A Ras-associating 1 domain is found at 39–133 (FHGVMRFYFQ…GRFVLKNEND (95 aa)). Positions 129–196 (KNENDAIPAK…PSQGDDSENS (68 aa)) are disordered. Residues 146-186 (EKQEKEGVIQNFKRTLSKKEKKEKKKREKEALRQASDKEER) are a coiled coil. A compositionally biased stretch (basic residues) spans 160-172 (TLSKKEKKEKKKR). Basic and acidic residues predominate over residues 173–189 (EKEALRQASDKEERPSQ). A phosphoserine mark is found at serine 216, serine 246, and serine 256. The Ras-associating 2 domain occupies 246–348 (SGGTLRIYAD…LVFQLKRRPP (103 aa)). Over residues 356-371 (KKHVEGKPLKGKDRAD) the composition is skewed to basic and acidic residues. Residues 356–377 (KKHVEGKPLKGKDRADGSGYGS) are disordered. Phosphoserine occurs at positions 391 and 424. The 67-residue stretch at 441–507 (FGPGIQPHHC…KFVDPIQDHV (67 aa)) folds into the FHA domain. 5 positions are modified to phosphoserine: serine 512, serine 557, serine 562, serine 589, and serine 655. The tract at residues 539–595 (DIHSGTALPASRSTTRLDSDRVSSASSTAERGMVKPMIRLDQEQDYRRRESRTQDAA) is disordered. Residues 576–591 (IRLDQEQDYRRRESRT) are compositionally biased toward basic and acidic residues. In terms of domain architecture, Dilute spans 668-915 (NKMVSMMEGV…IENVVAVAEN (248 aa)). The 87-residue stretch at 1014–1100 (VITVTLKKQN…VVTLEVAKQG (87 aa)) folds into the PDZ domain. Phosphoserine is present on residues serine 1090, serine 1114, serine 1133, serine 1147, serine 1150, serine 1179, serine 1180, serine 1189, and serine 1206. The disordered stretch occupies residues 1114-1230 (SPMMQRISDR…PRPEAYPIPT (117 aa)). Positions 1120–1135 (ISDRRGSGKPRPKSEG) are enriched in basic and acidic residues. Positions 1139–1150 (YNNSAQNGSPES) are enriched in polar residues. Residues 1159–1179 (SEPKKLPGDDRLMKNRADHRS) are compositionally biased toward basic and acidic residues. Residues 1195 to 1217 (PYTSGTAAKITSVSTGNLCTEEQ) show a composition bias toward polar residues. 2 positions are modified to phosphothreonine: threonine 1218 and threonine 1239. Serine 1245 and serine 1282 each carry phosphoserine. The segment covering 1300–1309 (ESGMDRKCDS) has biased composition (basic and acidic residues). 2 disordered regions span residues 1300-1533 (ESGM…EKQQ) and 1574-1724 (RLQE…KTQV). The segment covering 1316 to 1325 (SSSVESSTSS) has biased composition (low complexity). Positions 1332 to 1344 (SSKSVTPASTLTK) are enriched in polar residues. Serine 1335 is subject to Phosphoserine. Threonine 1337 bears the Phosphothreonine mark. A compositionally biased stretch (pro residues) spans 1371-1380 (LPPPPPPPPA). The segment covering 1401–1412 (NQAAPQSAQVAA) has biased composition (low complexity). A compositionally biased stretch (basic and acidic residues) spans 1413 to 1447 (AERKKREEHQRWYEKEKARLEEERERKRREQERKL). Residues 1417–1454 (KREEHQRWYEKEKARLEEERERKRREQERKLGQMRTQS) are a coiled coil. The span at 1450-1464 (MRTQSLNPASFSPLA) shows a compositional bias: polar residues. The segment covering 1494–1510 (TIERRDLQYITISKEEL) has biased composition (basic and acidic residues). Residues serine 1506 and serine 1517 each carry the phosphoserine modification. The segment covering 1520–1533 (PWKRDAREKLEKQQ) has biased composition (basic and acidic residues). Residues 1530 to 1564 (EKQQQMHIVDMLSKEIHELQNKGDRTAEESDRLRK) are a coiled coil. Over residues 1583–1594 (EDDDEEEDDDVD) the composition is skewed to acidic residues. The stretch at 1600–1672 (QRLEAERRAR…SRLEAERRRQ (73 aa)) forms a coiled coil. A compositionally biased stretch (basic and acidic residues) spans 1602–1682 (LEAERRARLQ…HEEAARRLLE (81 aa)). At serine 1701 the chain carries Phosphoserine. A compositionally biased stretch (polar residues) spans 1715–1724 (RNASYLKTQV). Phosphoserine is present on serine 1726. Residues 1742–1829 (DEEENYVPAG…TELENELNTK (88 aa)) form a disordered region. Positions 1753-1764 (NSYSGSAGTTAG) are enriched in polar residues. The segment covering 1768–1781 (APRDTREKLSRSQD) has biased composition (basic and acidic residues). Phosphoserine occurs at positions 1779 and 1804. Basic and acidic residues predominate over residues 1809–1829 (VSDKVKASRKLTELENELNTK). At lysine 1812 the chain carries N6-acetyllysine.

As to quaternary structure, homodimer. Interacts with F-actin, nectin and NECTIN3. Essential for the association of nectin and E-cadherin. Isoform 2/s-afadin does not interact with F-actin. Interacts with ZO-1 and occludin, but probably in an indirect manner. Interacts with RIT1, RIT2, NRXN1 and BCR. Interacts with ADAM10; the interaction locks ADAM10 at adherens junctions following ADAM10 recruitment to adherens junctions by TSPAN33. In terms of tissue distribution, isoform 1 is widely expressed, including in heart, brain, spleen, lung, liver, skeletal muscle, kidney and testis. Isoform 2 is mainly expressed in the brain.

It localises to the cell junction. The protein resides in the adherens junction. Its function is as follows. Belongs to an adhesion system, probably together with the E-cadherin-catenin system, which plays a role in the organization of homotypic, interneuronal and heterotypic cell-cell adherens junctions (AJs). Nectin- and actin-filament-binding protein that connects nectin to the actin cytoskeleton. May play a key role in the organization of epithelial structures of the embryonic ectoderm. Essential for the organization of adherens junctions. The protein is Afadin of Rattus norvegicus (Rat).